The primary structure comprises 344 residues: MTQKLTITRPDDWHLHLRDGAALAAVLPDTARQFARAIIMPNLKPPVTTVAQAQAYRARILAALPAGLQFEPLMTLYLTDNTTAEEIAAAKASGFVHGVKLYPAGATTNSDAGVTDIRRCYPALEAMQRAGLPLLVHGEVTDPSIDIFDREAVFIDRVMTPLRRDMPELKVVFEHITTKDAAEYVRDASGPVGATITAHHLLYNRNAIFTGGIRPHYYCLPVLKRETHREALVAAAVSGSPRFFLGTDSAPHARGLKEHACGCAGCYTALHAMELYAEAFDAAGALDKLEAFASFNGPAFYGLPRNTGTLTLEREDWELPAELPYGDTTLVPLRGGETLRWKAR.

Zn(2+) contacts are provided by H14 and H16. Residues 16–18 (HLR) and N42 contribute to the substrate site. Zn(2+) is bound by residues K100, H137, and H175. An N6-carboxylysine modification is found at K100. H137 contacts substrate. L220 contacts substrate. D248 is a binding site for Zn(2+). D248 is a catalytic residue. Substrate is bound by residues H252 and A264.

Belongs to the metallo-dependent hydrolases superfamily. DHOase family. Class II DHOase subfamily. As to quaternary structure, homodimer. The cofactor is Zn(2+).

The enzyme catalyses (S)-dihydroorotate + H2O = N-carbamoyl-L-aspartate + H(+). It functions in the pathway pyrimidine metabolism; UMP biosynthesis via de novo pathway; (S)-dihydroorotate from bicarbonate: step 3/3. In terms of biological role, catalyzes the reversible cyclization of carbamoyl aspartate to dihydroorotate. This Cupriavidus necator (strain ATCC 17699 / DSM 428 / KCTC 22496 / NCIMB 10442 / H16 / Stanier 337) (Ralstonia eutropha) protein is Dihydroorotase.